The chain runs to 221 residues: Immediate early response gene 2 protein (221 aa).

At Met1 the chain carries N-acetylmethionine. Residues 105–155 form a disordered region; sequence ETPALCDPPPARVSRKRRSSSDLSDGSDAGLVPSKKARLEEVEGEATSEVP. The span at 125–136 shows a compositional bias: low complexity; the sequence is SDLSDGSDAGLV.

Belongs to the IER family.

The protein resides in the cytoplasm. It is found in the nucleus. In terms of biological role, DNA-binding protein that seems to act as a transcription factor. Involved in the regulation of neuronal differentiation, acts upon JNK-signaling pathway activation and plays a role in neurite outgrowth in hippocampal cells. May mediate with FIBP FGF-signaling in the establishment of laterality in the embryo. Promotes cell motility, seems to stimulate tumor metastasis. This chain is Immediate early response gene 2 protein (Ier2), found in Mus musculus (Mouse).